Here is a 393-residue protein sequence, read N- to C-terminus: Sialyltransferase-like protein 1 (393 aa).

Residues 1-8 (MKRPLRRP) are Cytoplasmic-facing. The helical; Signal-anchor for type II membrane protein transmembrane segment at 9–27 (FAVLLFVVLCAAASFPSVL) threads the bilayer. The Lumenal portion of the chain corresponds to 28–393 (RRSVGPAPVL…IAVPPVVFYH (366 aa)). 3 N-linked (GlcNAc...) asparagine glycosylation sites follow: N49, N212, and N258.

Belongs to the glycosyltransferase 29 family. Expressed in leaves and stalks. Expressed at low levels in roots.

Its subcellular location is the golgi apparatus membrane. Possesses sialyltransferase-like activity in vitro. Transfers sialic acid to the oligosaccharide Gal-beta-1,3-GalNAc and to glycoproteins such as asialofetuin, alpha-1-acid glycoprotein (NeuAc-alpha-2,3-Gal-beta-1,3-GalNAc-) and andasialo-alpha-1-acid glycoprotein. The transferred sialic acid is linked to galactose of Gal-beta-1,3-GalNAc through alpha-2,6-linkage. This is Sialyltransferase-like protein 1 from Oryza sativa subsp. japonica (Rice).